Reading from the N-terminus, the 410-residue chain is Argininosuccinate synthase (410 aa).

Position 9–17 (9–17 (AYSGGLDTS)) interacts with ATP. Tyr86 contacts L-citrulline. Gly116 contacts ATP. Residues Thr118, Asn122, and Asp123 each contribute to the L-aspartate site. Residue Asn122 coordinates L-citrulline. L-citrulline-binding residues include Arg126, Ser174, Glu259, and Tyr271.

The protein belongs to the argininosuccinate synthase family. Type 1 subfamily. In terms of assembly, homotetramer.

It localises to the cytoplasm. It catalyses the reaction L-citrulline + L-aspartate + ATP = 2-(N(omega)-L-arginino)succinate + AMP + diphosphate + H(+). The protein operates within amino-acid biosynthesis; L-arginine biosynthesis; L-arginine from L-ornithine and carbamoyl phosphate: step 2/3. The sequence is that of Argininosuccinate synthase from Limosilactobacillus reuteri (strain DSM 20016) (Lactobacillus reuteri).